Here is a 178-residue protein sequence, read N- to C-terminus: ATP-dependent protease subunit HslV (178 aa).

Residue threonine 8 is part of the active site. Na(+) contacts are provided by glycine 163, cysteine 166, and threonine 169.

The protein belongs to the peptidase T1B family. HslV subfamily. In terms of assembly, a double ring-shaped homohexamer of HslV is capped on each side by a ring-shaped HslU homohexamer. The assembly of the HslU/HslV complex is dependent on binding of ATP.

It is found in the cytoplasm. It carries out the reaction ATP-dependent cleavage of peptide bonds with broad specificity.. Allosterically activated by HslU binding. Functionally, protease subunit of a proteasome-like degradation complex believed to be a general protein degrading machinery. This is ATP-dependent protease subunit HslV from Xylella fastidiosa (strain 9a5c).